Here is a 334-residue protein sequence, read N- to C-terminus: Cathepsin K (334 aa).

The signal sequence occupies residues 1-19; sequence MLRLHWLALLVLLLPMAAA. A propeptide spans 20-119 (activation peptide); that stretch reads QLRPEPELDA…TLYVPDWSSR (100 aa). Asparagine 108 carries N-linked (GlcNAc...) asparagine glycosylation. Cystine bridges form between cysteine 141-cysteine 182, cysteine 175-cysteine 215, and cysteine 274-cysteine 323. Cysteine 144 is a catalytic residue. Catalysis depends on residues histidine 281 and asparagine 301.

It belongs to the peptidase C1 family.

The catalysed reaction is Broad proteolytic activity. With small-molecule substrates and inhibitors, the major determinant of specificity is P2, which is preferably Leu, Met &gt; Phe, and not Arg.. Its function is as follows. Closely involved in osteoclastic bone resorption and may participate partially in the disorder of bone remodeling. Displays potent endoprotease activity against fibrinogen at acid pH. May play an important role in extracellular matrix degradation. In Gallus gallus (Chicken), this protein is Cathepsin K (CTSK).